A 120-amino-acid chain; its full sequence is Small ribosomal subunit protein uS17m (120 aa).

The transit peptide at 1 to 20 directs the protein to the mitochondrion; that stretch reads MSIVRSSVHAKWVVGKVIGT.

The protein belongs to the universal ribosomal protein uS17 family. In terms of assembly, component of the mitochondrial ribosome small subunit (28S) which comprises a 12S rRNA and about 30 distinct proteins.

Its subcellular location is the mitochondrion. This is Small ribosomal subunit protein uS17m (Mrps17) from Mus musculus (Mouse).